A 493-amino-acid polypeptide reads, in one-letter code: Alpha-amylase-related protein (493 aa).

Positions 1-19 (MFKFATAVILCLAASSTLA) are cleaved as a signal peptide. Position 20 is a pyrrolidone carboxylic acid (Gln20). A disulfide bond links Cys47 and Cys103. 3 residues coordinate Ca(2+): Asn117, Gln168, and Asp177. A disulfide bridge connects residues Cys156 and Cys170. Arg205 contacts chloride. The active-site Nucleophile is the Asp207. Residue His211 coordinates Ca(2+). The active-site Proton donor is the Glu244. Asn307 and Arg342 together coordinate chloride. 3 disulfides stabilise this stretch: Cys375/Cys381, Cys417/Cys440, and Cys447/Cys459.

The protein belongs to the glycosyl hydrolase 13 family. Monomer. The cofactor is Ca(2+). It depends on chloride as a cofactor.

It is found in the secreted. It catalyses the reaction Endohydrolysis of (1-&gt;4)-alpha-D-glucosidic linkages in polysaccharides containing three or more (1-&gt;4)-alpha-linked D-glucose units.. The protein is Alpha-amylase-related protein (Amyrel) of Drosophila ananassae (Fruit fly).